Here is a 254-residue protein sequence, read N- to C-terminus: Transmembrane protein 269 (254 aa).

5 consecutive transmembrane segments (helical) span residues 44 to 64, 69 to 89, 113 to 135, 171 to 191, and 210 to 230; these read IINA…FCSF, YCAS…GTMT, LASA…IYVL, LTKG…LFMI, and IVYI…TAFY.

The protein localises to the membrane. The sequence is that of Transmembrane protein 269 from Mus musculus (Mouse).